A 493-amino-acid polypeptide reads, in one-letter code: Endothelial lipase (493 aa).

The N-terminal stretch at 1-23 (MRDPVFLLGFWSLYCCFPAGSLT) is a signal peptide. Cys-66 and Cys-79 are disulfide-bonded. N-linked (GlcNAc...) asparagine glycosylation is found at Asn-67 and Asn-82. Ser-171 acts as the Nucleophile in catalysis. Residue Asp-195 is the Charge relay system of the active site. A disulfide bridge connects residues Cys-254 and Cys-274. His-276 serves as the catalytic Charge relay system. 2 disulfides stabilise this stretch: Cys-299-Cys-318 and Cys-310-Cys-313. 327–339 (KMRKKRNSKMYLK) lines the heparin pocket. Positions 349–484 (YHYQLKVHMF…SPGQELWFYK (136 aa)) constitute a PLAT domain. Residue Asn-395 is glycosylated (N-linked (GlcNAc...) asparagine). Cys-465 and Cys-485 are oxidised to a cystine.

It belongs to the AB hydrolase superfamily. Lipase family. In terms of assembly, head to tail Homodimer. Interacts with apolipoprotein C-2.

The protein localises to the secreted. It carries out the reaction a triacylglycerol + H2O = a diacylglycerol + a fatty acid + H(+). The catalysed reaction is a 1,2-diacyl-sn-glycero-3-phosphocholine + H2O = a 2-acyl-sn-glycero-3-phosphocholine + a fatty acid + H(+). The enzyme catalyses 1,2,3-tri-(9Z-octadecenoyl)-glycerol + H2O = di-(9Z)-octadecenoylglycerol + (9Z)-octadecenoate + H(+). It catalyses the reaction 1,2,3-tributanoylglycerol + H2O = dibutanoylglycerol + butanoate + H(+). It carries out the reaction 1,2-dihexadecanoyl-sn-glycero-3-phosphocholine + H2O = hexadecanoyl-sn-glycero-3-phosphocholine + hexadecanoate + H(+). Exerts both phospholipase and triglyceride lipase activities. More active as a phospholipase than a triglyceride lipase. Hydrolyzes triglycerides, both with short-chain fatty acyl groups (tributyrin) and long-chain fatty acyl groups (triolein) with similar levels of activity toward both types of substrates. Hydrolyzes high density lipoproteins (HDL) more efficiently than other lipoproteins. This chain is Endothelial lipase (Lipg), found in Rattus norvegicus (Rat).